The following is a 601-amino-acid chain: Somatic embryogenesis receptor kinase 5 (601 aa).

The signal sequence occupies residues 1-24; sequence MEHGSSRGFIWLILFLDFVSRVTG. At 25–215 the chain is on the extracellular side; that stretch reads KTQVDALIAL…SPSPSPSGTS (191 aa). Residues asparagine 52, asparagine 81, asparagine 105, asparagine 129, asparagine 151, and asparagine 184 are each glycosylated (N-linked (GlcNAc...) asparagine). LRR repeat units lie at residues 71–94, 95–118, 119–141, 143–165, and 166–188; these read SVTRLDLGSANLSGELVPQLAQLP, NLQYLELFNNNITGEIPEELGDLM, ELVSLDLFANNISGPIPSSLGKL, KLRFLRLYNNSLSGEIPRSLTAL, and PLDVLDISNNRLSGDIPVNGSFS. The chain crosses the membrane as a helical span at residues 216 to 236; it reads AAIVVGVAAGAALLFALAWWL. Residues 237–601 are Cytoplasmic-facing; that stretch reads RRKLQGHFLD…IENDYPSGPR (365 aa). Residue threonine 272 is modified to Phosphothreonine. The Protein kinase domain occupies 275–572; that stretch reads FSKRNVLGKG…KEEMPIHDFN (298 aa). 281–289 is a binding site for ATP; the sequence is LGKGRFGIL. At threonine 298 the chain carries Phosphothreonine. Position 303 (lysine 303) interacts with ATP. 2 positions are modified to phosphoserine: serine 356 and serine 359. Aspartate 402 (proton acceptor) is an active-site residue. Threonine 435, threonine 436, and threonine 441 each carry phosphothreonine. Tyrosine 449 carries the post-translational modification Phosphotyrosine. At serine 451 the chain carries Phosphoserine. Threonine 452 is subject to Phosphothreonine. Serine 456 and serine 506 each carry phosphoserine. Residue threonine 532 is modified to Phosphothreonine.

This sequence belongs to the protein kinase superfamily. Ser/Thr protein kinase family. Interacts with TMK4/BARK1. In terms of processing, autophosphorylated.

It localises to the cell membrane. It catalyses the reaction L-seryl-[protein] + ATP = O-phospho-L-seryl-[protein] + ADP + H(+). The catalysed reaction is L-threonyl-[protein] + ATP = O-phospho-L-threonyl-[protein] + ADP + H(+). Serine/threonine-kinase of unknown function. This Arabidopsis thaliana (Mouse-ear cress) protein is Somatic embryogenesis receptor kinase 5 (SERK5).